The primary structure comprises 350 residues: MSRFWSPVVRTLSPYVPGEQPKQDGVVKLNTNENPYPPSPRVLAAIASAAERLRLYPDPRATRLREAIAAYCDVAAEQVFVGNGSDEVLAHTFPALLKHDRPLLFPDVTYSFYPVYCRLYGVAHEEVPLDAAMRIEIADYRRPSSAILLCNPNAPTGIALPRDAVAALLAENPDRLVVVDEAYVDFGAESAVPLVAHHDNLLVIQTFSKSRALAGLRVGFAIGQRPLIEALERVKDSFNSYPVDCLAIAGAVAAIEDEAWFLESRTRIIASRDVLTRDLAQLGFEVLPSLANFVFARHRRRSGADLAAALRQRGVLVRHFKKPRIEDFLRITVGTDEQCGRLIEVLRELI.

Lys209 carries the N6-(pyridoxal phosphate)lysine modification.

Belongs to the class-II pyridoxal-phosphate-dependent aminotransferase family. Histidinol-phosphate aminotransferase subfamily. Homodimer. The cofactor is pyridoxal 5'-phosphate.

The enzyme catalyses L-histidinol phosphate + 2-oxoglutarate = 3-(imidazol-4-yl)-2-oxopropyl phosphate + L-glutamate. It participates in amino-acid biosynthesis; L-histidine biosynthesis; L-histidine from 5-phospho-alpha-D-ribose 1-diphosphate: step 7/9. The chain is Histidinol-phosphate aminotransferase 1 (hisC1) from Bradyrhizobium diazoefficiens (strain JCM 10833 / BCRC 13528 / IAM 13628 / NBRC 14792 / USDA 110).